Here is a 404-residue protein sequence, read N- to C-terminus: CinA-like protein (404 aa).

It belongs to the CinA family.

The chain is CinA-like protein from Deinococcus radiodurans (strain ATCC 13939 / DSM 20539 / JCM 16871 / CCUG 27074 / LMG 4051 / NBRC 15346 / NCIMB 9279 / VKM B-1422 / R1).